The sequence spans 875 residues: Kelch-like protein 29 (875 aa).

Residues 115-126 (WGQTPINQSTPW) show a composition bias toward polar residues. 2 disordered regions span residues 115 to 145 (WGQT…PGTG) and 248 to 291 (GPTA…DSAH). Residues 131–140 (PPSKQMRESD) are compositionally biased toward basic and acidic residues. The region spanning 329–401 (TDLKIVVEGR…VYTGSLVIDS (73 aa)) is the BTB domain. Kelch repeat units lie at residues 585 to 635 (VIVL…VSAG), 637 to 683 (NIYL…VYDG), 684 to 730 (KIYT…VCGG), 732 to 778 (IYVF…TLNG), 779 to 821 (FVFI…VLDG), and 822 to 870 (KIYA…VIKK).

The sequence is that of Kelch-like protein 29 (KLHL29) from Homo sapiens (Human).